The following is a 250-amino-acid chain: Pyrroloquinoline-quinone synthase (250 aa).

Belongs to the PqqC family.

The enzyme catalyses 6-(2-amino-2-carboxyethyl)-7,8-dioxo-1,2,3,4,7,8-hexahydroquinoline-2,4-dicarboxylate + 3 O2 = pyrroloquinoline quinone + 2 H2O2 + 2 H2O + H(+). It participates in cofactor biosynthesis; pyrroloquinoline quinone biosynthesis. Ring cyclization and eight-electron oxidation of 3a-(2-amino-2-carboxyethyl)-4,5-dioxo-4,5,6,7,8,9-hexahydroquinoline-7,9-dicarboxylic-acid to PQQ. This is Pyrroloquinoline-quinone synthase from Xanthomonas euvesicatoria pv. vesicatoria (strain 85-10) (Xanthomonas campestris pv. vesicatoria).